We begin with the raw amino-acid sequence, 625 residues long: Probable potassium transport system protein Kup (625 aa).

The next 12 helical transmembrane spans lie at leucine 10 to leucine 30, leucine 50 to valine 70, tyrosine 102 to isoleucine 122, leucine 135 to valine 155, phenylalanine 172 to isoleucine 192, glycine 214 to leucine 234, phenylalanine 251 to leucine 271, leucine 284 to serine 304, isoleucine 340 to phenylalanine 360, alanine 369 to isoleucine 389, leucine 397 to alanine 417, and leucine 422 to threonine 442.

This sequence belongs to the HAK/KUP transporter (TC 2.A.72) family.

Its subcellular location is the cell inner membrane. The enzyme catalyses K(+)(in) + H(+)(in) = K(+)(out) + H(+)(out). Transport of potassium into the cell. Likely operates as a K(+):H(+) symporter. This Herminiimonas arsenicoxydans protein is Probable potassium transport system protein Kup.